The sequence spans 293 residues: uncharacterized protein (293 aa).

To M.jannaschii MJ1614 and MJ0008.

This is an uncharacterized protein from Methanocaldococcus jannaschii (strain ATCC 43067 / DSM 2661 / JAL-1 / JCM 10045 / NBRC 100440) (Methanococcus jannaschii).